A 371-amino-acid chain; its full sequence is GDP-perosamine synthase (371 aa).

At Lys186 the chain carries N6-(pyridoxal phosphate)lysine.

The protein belongs to the DegT/DnrJ/EryC1 family. Homodimer. Pyridoxal 5'-phosphate is required as a cofactor.

The enzyme catalyses GDP-alpha-D-perosamine + 2-oxoglutarate = GDP-4-dehydro-alpha-D-rhamnose + L-glutamate. Its pathway is bacterial outer membrane biogenesis; LPS O-antigen biosynthesis. Functionally, catalyzes the synthesis of GDP-perosamine from GDP-4-keto-6-deoxy-D-mannose and L-glutamate. Can use only L-glutamate as amino donor. In vitro, can also use GDP-4-keto-3,6-dideoxymannose to produce GDP-3-deoxyperosamine. Involved in the formation of S-LPS, which is required for attachment of the protein S-layer to the outer membrane surface. The polypeptide is GDP-perosamine synthase (Caulobacter vibrioides (strain ATCC 19089 / CIP 103742 / CB 15) (Caulobacter crescentus)).